Consider the following 59-residue polypeptide: Large ribosomal subunit protein uL30 (59 aa).

Belongs to the universal ribosomal protein uL30 family. In terms of assembly, part of the 50S ribosomal subunit.

This Persephonella marina (strain DSM 14350 / EX-H1) protein is Large ribosomal subunit protein uL30.